A 73-amino-acid polypeptide reads, in one-letter code: DNA-directed RNA polymerase subunit epsilon (73 aa).

It belongs to the RNA polymerase subunit epsilon family. As to quaternary structure, RNAP is composed of a core of 2 alpha, a beta and a beta' subunit. The core is associated with a delta subunit, and at least one of epsilon or omega. When a sigma factor is associated with the core the holoenzyme is formed, which can initiate transcription.

The enzyme catalyses RNA(n) + a ribonucleoside 5'-triphosphate = RNA(n+1) + diphosphate. Functionally, a non-essential component of RNA polymerase (RNAP). The polypeptide is DNA-directed RNA polymerase subunit epsilon (Lactobacillus helveticus (strain DPC 4571)).